Consider the following 271-residue polypeptide: NAD kinase (271 aa).

Asp-52 (proton acceptor) is an active-site residue. NAD(+) contacts are provided by residues 52–53, 129–130, Arg-155, Asp-157, and Ala-192; these read DG and NE.

This sequence belongs to the NAD kinase family. A divalent metal cation serves as cofactor.

It localises to the cytoplasm. The enzyme catalyses NAD(+) + ATP = ADP + NADP(+) + H(+). Involved in the regulation of the intracellular balance of NAD and NADP, and is a key enzyme in the biosynthesis of NADP. Catalyzes specifically the phosphorylation on 2'-hydroxyl of the adenosine moiety of NAD to yield NADP. The chain is NAD kinase from Geobacillus stearothermophilus (Bacillus stearothermophilus).